Consider the following 175-residue polypeptide: Protein her-1 (175 aa).

A signal peptide spans Met1–Thr18. Residues Asn98 and Asn163 are each glycosylated (N-linked (GlcNAc...) asparagine).

It is found in the secreted. In terms of biological role, dictates male development. Probably plays a direct role in cell signaling during C.elegans sex determination. Inhibits the function of tra-2a. The chain is Protein her-1 (her-1) from Caenorhabditis elegans.